Consider the following 249-residue polypeptide: Triosephosphate isomerase (249 aa).

The substrate site is built by N12 and K14. K14 carries the post-translational modification N6-acetyllysine. At N16 the chain carries Deamidated asparagine. Y68 carries the 3'-nitrotyrosine modification. N72 carries the deamidated asparagine modification. S80 bears the Phosphoserine mark. H96 functions as the Electrophile in the catalytic mechanism. Phosphoserine is present on S106. A Glycyl lysine isopeptide (Lys-Gly) (interchain with G-Cter in SUMO1) cross-link involves residue K142. K149 is modified (N6-succinyllysine). K156 carries the N6-acetyllysine; alternate modification. Residue K156 is modified to N6-succinyllysine; alternate. Phosphoserine is present on S159. E166 functions as the Proton acceptor in the catalytic mechanism. T173 carries the phosphothreonine modification. Residue K194 is modified to N6-acetyllysine; alternate. K194 carries the post-translational modification N6-succinyllysine; alternate. K194 carries the post-translational modification N6-methyllysine; alternate. The residue at position 198 (S198) is a Phosphoserine. Residue Y209 is modified to 3'-nitrotyrosine. Position 212 is a phosphoserine (S212). A Phosphothreonine modification is found at T214. A Phosphoserine modification is found at S223. At K238 the chain carries N6-acetyllysine.

Belongs to the triosephosphate isomerase family. In terms of assembly, homodimer. Post-translationally, asn-16 and Asn-72 undergo deamidation which gives rise to four extra negative charges. These are expected to decrease subunit-subunit interactions and so expose the hydrophobic interface to the aqueous environment.

It localises to the cytoplasm. The enzyme catalyses D-glyceraldehyde 3-phosphate = dihydroxyacetone phosphate. It catalyses the reaction dihydroxyacetone phosphate = methylglyoxal + phosphate. The protein operates within carbohydrate degradation; glycolysis; D-glyceraldehyde 3-phosphate from glycerone phosphate: step 1/1. Its pathway is carbohydrate biosynthesis; gluconeogenesis. In terms of biological role, triosephosphate isomerase is an extremely efficient metabolic enzyme that catalyzes the interconversion between dihydroxyacetone phosphate (DHAP) and D-glyceraldehyde-3-phosphate (G3P) in glycolysis and gluconeogenesis. Its function is as follows. It is also responsible for the non-negligible production of methylglyoxal a reactive cytotoxic side-product that modifies and can alter proteins, DNA and lipids. This chain is Triosephosphate isomerase (TPI1), found in Oryctolagus cuniculus (Rabbit).